Reading from the N-terminus, the 233-residue chain is Sugar fermentation stimulation protein homolog (233 aa).

It belongs to the SfsA family.

This chain is Sugar fermentation stimulation protein homolog, found in Pyrobaculum neutrophilum (strain DSM 2338 / JCM 9278 / NBRC 100436 / V24Sta) (Thermoproteus neutrophilus).